The chain runs to 440 residues: Xaa-Pro dipeptidase (440 aa).

Residues aspartate 244, aspartate 255, histidine 335, glutamate 380, and glutamate 419 each coordinate Mn(2+).

Belongs to the peptidase M24B family. Bacterial-type prolidase subfamily. Mn(2+) is required as a cofactor.

It catalyses the reaction Xaa-L-Pro dipeptide + H2O = an L-alpha-amino acid + L-proline. In terms of biological role, splits dipeptides with a prolyl residue in the C-terminal position. This Shewanella baltica (strain OS223) protein is Xaa-Pro dipeptidase.